A 360-amino-acid polypeptide reads, in one-letter code: Spermidine/putrescine-binding periplasmic protein 1 (360 aa).

Positions 1–16 are cleaved as a signal peptide; it reads MKKFAGLITASFVAAT.

It belongs to the bacterial solute-binding protein PotD/PotF family.

It is found in the periplasm. Required for the activity of the bacterial periplasmic transport system of putrescine and spermidine. Polyamine binding protein. The sequence is that of Spermidine/putrescine-binding periplasmic protein 1 (potD-B) from Haemophilus influenzae (strain ATCC 51907 / DSM 11121 / KW20 / Rd).